The following is a 174-amino-acid chain: Adenine phosphoribosyltransferase (174 aa).

It belongs to the purine/pyrimidine phosphoribosyltransferase family. Homodimer.

It localises to the cytoplasm. It catalyses the reaction AMP + diphosphate = 5-phospho-alpha-D-ribose 1-diphosphate + adenine. It participates in purine metabolism; AMP biosynthesis via salvage pathway; AMP from adenine: step 1/1. Functionally, catalyzes a salvage reaction resulting in the formation of AMP, that is energically less costly than de novo synthesis. This chain is Adenine phosphoribosyltransferase, found in Agathobacter rectalis (strain ATCC 33656 / DSM 3377 / JCM 17463 / KCTC 5835 / VPI 0990) (Eubacterium rectale).